The sequence spans 319 residues: NADH-quinone oxidoreductase subunit H 2 (319 aa).

The next 9 helical transmembrane spans lie at 1–21, 77–97, 107–127, 147–167, 179–199, 214–234, 238–258, 262–282, and 293–313; these read MIGMIITATISVALIMVLLVL, ILAPAVAATPVLAGFGVVAIG, VGLLFLLGMLGLTAYAAVLGA, LAYEVFLGLSLMGVVMIAGSF, VWFVVLQPLGMALFTIAGIAA, LIAGFITEYTGMSFGLFFLGE, VLLVSALAVTLFFGGWLGPWL, VWFGLKTAVIAVAFVWIRATL, and FAWKVALPLSLLNLMLTGIVV.

This sequence belongs to the complex I subunit 1 family. As to quaternary structure, NDH-1 is composed of 14 different subunits. Subunits NuoA, H, J, K, L, M, N constitute the membrane sector of the complex.

Its subcellular location is the cell inner membrane. It catalyses the reaction a quinone + NADH + 5 H(+)(in) = a quinol + NAD(+) + 4 H(+)(out). Its function is as follows. NDH-1 shuttles electrons from NADH, via FMN and iron-sulfur (Fe-S) centers, to quinones in the respiratory chain. The immediate electron acceptor for the enzyme in this species is believed to be ubiquinone. Couples the redox reaction to proton translocation (for every two electrons transferred, four hydrogen ions are translocated across the cytoplasmic membrane), and thus conserves the redox energy in a proton gradient. This subunit may bind ubiquinone. This is NADH-quinone oxidoreductase subunit H 2 from Rhodopseudomonas palustris (strain ATCC BAA-98 / CGA009).